A 905-amino-acid polypeptide reads, in one-letter code: Protein translocase subunit SecA (905 aa).

ATP contacts are provided by residues Gln87, 105 to 109 (GEGKT), and Asp512. The tract at residues 565-584 (RRIDNQLRGRSGRQGDPGSS) is disordered. Cys886, Cys888, Cys897, and His898 together coordinate Zn(2+).

This sequence belongs to the SecA family. As to quaternary structure, monomer and homodimer. Part of the essential Sec protein translocation apparatus which comprises SecA, SecYEG and auxiliary proteins SecDF-YajC and YidC. The cofactor is Zn(2+).

The protein resides in the cell inner membrane. The protein localises to the cytoplasm. It carries out the reaction ATP + H2O + cellular proteinSide 1 = ADP + phosphate + cellular proteinSide 2.. Functionally, part of the Sec protein translocase complex. Interacts with the SecYEG preprotein conducting channel. Has a central role in coupling the hydrolysis of ATP to the transfer of proteins into and across the cell membrane, serving both as a receptor for the preprotein-SecB complex and as an ATP-driven molecular motor driving the stepwise translocation of polypeptide chains across the membrane. This is Protein translocase subunit SecA from Haemophilus ducreyi (strain 35000HP / ATCC 700724).